Here is a 621-residue protein sequence, read N- to C-terminus: Interferon-induced GTP-binding protein Mx1 (621 aa).

One can recognise a Dynamin-type G domain in the interval Asp-31–Pro-304. A G1 motif region spans residues Gly-41–Ser-48. GTP is bound at residue Gly-41–Ser-48. Positions Val-66 to Arg-68 are G2 motif. The segment at Asp-142–Gly-145 is G3 motif. GTP contacts are provided by residues Asp-142–Ile-146 and Thr-211–Asp-214. Positions Thr-211–Asp-214 are G4 motif. The interval Lys-243–Gly-246 is G5 motif. Positions Leu-535 to Phe-621 constitute a GED domain.

It belongs to the TRAFAC class dynamin-like GTPase superfamily. Dynamin/Fzo/YdjA family.

Its subcellular location is the cytoplasm. Its function is as follows. Does not inhibit strain RB-1 of the fish pathogen, infectious hematopoietic necrosis virus (IHNV). The chain is Interferon-induced GTP-binding protein Mx1 (mx1) from Oncorhynchus mykiss (Rainbow trout).